The primary structure comprises 548 residues: Aspergilol synthase AuAP450 (548 aa).

A helical transmembrane segment spans residues 38–58 (PQLVITTLGALLLAAFYLLPS). Position 489 (cysteine 489) interacts with heme.

The protein belongs to the cytochrome P450 family. It depends on heme as a cofactor.

Its subcellular location is the membrane. The protein operates within secondary metabolite biosynthesis; terpenoid biosynthesis. In terms of biological role, cytochrome P450 monooxygenase; part of the gene cluster that mediates the biosynthesis of aspergiltriene A, aspergildienes A-D and aspergilols A-D. The bifunctional terpene synthase AuAS converts DMAPP and IPP into sesterterpenes. The C-terminal prenyltransferase (PT) domain of AuAS catalyzes formation of GFPP, whereas the N-terminal terpene cyclase (TC) domain catalyzes the cyclization of GFPP into 5 distinct sesterterpenes: aspergiltriene A, aspergildiene A, aspergildiene B, aspergildiene C and aspergildiene D. The cytochrome P450 monooxygenase AP450 then hydroxylates the aspergildienes A, B, C and D to yield the corresponding sesterterpene alcohols, aspergilols A-D. The chain is Aspergilol synthase AuAP450 from Aspergillus ustus.